The primary structure comprises 238 residues: Ribonuclease PH (238 aa).

Phosphate contacts are provided by residues Arg-86 and 124 to 126 (GTR).

This sequence belongs to the RNase PH family. Homohexameric ring arranged as a trimer of dimers.

It carries out the reaction tRNA(n+1) + phosphate = tRNA(n) + a ribonucleoside 5'-diphosphate. Functionally, phosphorolytic 3'-5' exoribonuclease that plays an important role in tRNA 3'-end maturation. Removes nucleotide residues following the 3'-CCA terminus of tRNAs; can also add nucleotides to the ends of RNA molecules by using nucleoside diphosphates as substrates, but this may not be physiologically important. Probably plays a role in initiation of 16S rRNA degradation (leading to ribosome degradation) during starvation. The polypeptide is Ribonuclease PH (Psychrobacter arcticus (strain DSM 17307 / VKM B-2377 / 273-4)).